The following is a 961-amino-acid chain: Translation initiation factor IF-2 (961 aa).

The span at 146 to 158 (PSVPNKTLTTTPH) shows a compositional bias: polar residues. The tract at residues 146 to 373 (PSVPNKTLTT…KTTSQVTTQP (228 aa)) is disordered. Over residues 163–176 (NHSEKDVLESHDSS) the composition is skewed to basic and acidic residues. The segment covering 177-187 (NKNIKQSSSQN) has biased composition (low complexity). Residues 230 to 239 (SEEKNVDIQQ) show a composition bias toward basic and acidic residues. 2 stretches are compositionally biased toward polar residues: residues 241-285 (EIPS…TAPH) and 301-310 (YQGQNRNNFI). Over residues 355–364 (NRGRKRHKQK) the composition is skewed to basic residues. Positions 460–627 (RRPPVVTIMG…LLALQTDILE (168 aa)) constitute a tr-type G domain. The segment at 469 to 476 (GHVDHGKT) is G1. GTP is bound at residue 469-476 (GHVDHGKT). The interval 494 to 498 (GITQH) is G2. The interval 515-518 (DTPG) is G3. GTP-binding positions include 515–519 (DTPGH) and 569–572 (NKMD). The segment at 569 to 572 (NKMD) is G4. Positions 605–607 (SAK) are G5.

The protein belongs to the TRAFAC class translation factor GTPase superfamily. Classic translation factor GTPase family. IF-2 subfamily.

It localises to the cytoplasm. In terms of biological role, one of the essential components for the initiation of protein synthesis. Protects formylmethionyl-tRNA from spontaneous hydrolysis and promotes its binding to the 30S ribosomal subunits. Also involved in the hydrolysis of GTP during the formation of the 70S ribosomal complex. The polypeptide is Translation initiation factor IF-2 (Lawsonia intracellularis (strain PHE/MN1-00)).